The primary structure comprises 119 residues: Beta-2-microglobulin (119 aa).

The N-terminal stretch at 1–20 (MARSVVVALLVLLSLSGLEA) is a signal peptide. Positions 25-114 (PKIQVYSRHP…VTFPTPKTVK (90 aa)) constitute an Ig-like C1-type domain. Cysteines 45 and 100 form a disulfide.

Belongs to the beta-2-microglobulin family. In terms of assembly, heterodimer of an alpha chain and a beta chain. Beta-2-microglobulin is the beta-chain of major histocompatibility complex class I molecules.

The protein localises to the secreted. Its function is as follows. Component of the class I major histocompatibility complex (MHC). Involved in the presentation of peptide antigens to the immune system. The chain is Beta-2-microglobulin (B2M) from Lagothrix lagotricha (Brown woolly monkey).